Reading from the N-terminus, the 302-residue chain is tRNA pseudouridine synthase B (302 aa).

The Nucleophile role is filled by Asp-45.

Belongs to the pseudouridine synthase TruB family. Type 1 subfamily.

It carries out the reaction uridine(55) in tRNA = pseudouridine(55) in tRNA. Functionally, responsible for synthesis of pseudouridine from uracil-55 in the psi GC loop of transfer RNAs. The protein is tRNA pseudouridine synthase B of Francisella philomiragia subsp. philomiragia (strain ATCC 25017 / CCUG 19701 / FSC 153 / O#319-036).